A 185-amino-acid chain; its full sequence is Ribosome-recycling factor (185 aa).

Positions 141–161 (KQEKDKKISEDDLKRAEKEVQ) are disordered.

Belongs to the RRF family.

It is found in the cytoplasm. In terms of biological role, responsible for the release of ribosomes from messenger RNA at the termination of protein biosynthesis. May increase the efficiency of translation by recycling ribosomes from one round of translation to another. The sequence is that of Ribosome-recycling factor from Geotalea uraniireducens (strain Rf4) (Geobacter uraniireducens).